Consider the following 139-residue polypeptide: Large ribosomal subunit protein bL21 (139 aa).

The protein belongs to the bacterial ribosomal protein bL21 family. Part of the 50S ribosomal subunit. Contacts protein L20.

Its function is as follows. This protein binds to 23S rRNA in the presence of protein L20. The sequence is that of Large ribosomal subunit protein bL21 from Prochlorococcus marinus (strain NATL2A).